We begin with the raw amino-acid sequence, 549 residues long: OBERON-like protein (549 aa).

The disordered stretch occupies residues 1–56 (MLPPRQQPRPGGLQTSLSLVSPDACGSPNPQERGSTSDQARDSPSESASSRETWPT). Composition is skewed to polar residues over residues 28–38 (PNPQERGSTSD) and 45–56 (SESASSRETWPT). The segment at 224 to 288 (LCMCVICYKF…LFRCHACSRT (65 aa)) adopts a PHD-type zinc-finger fold. Residues 394–520 (VQEAIRKMEA…YLFEKIKLQE (127 aa)) are a coiled coil. The disordered stretch occupies residues 519–549 (QESSRASQSSAGGNDPSQMMYSKIQDLIKNM). Residues 521-538 (SSRASQSSAGGNDPSQMM) are compositionally biased toward polar residues.

Self-interacts and probably forms heteromers. Binds to VPg of pea seed borne mosaic virus (PSbMV), turnip mosaic virus (TuMV) and lettuce mosaic virus (LMV), but not with VPg of tobacco etch virus (TEV), cowpea mosaic virus (CPMV), tomato black ring virus (TBRV) and grapevine fan leaf virus (GFLV).

Its subcellular location is the nucleus. Functionally, required for the maintenance and/or establishment of both the shoot and root meristems, probably by controlling the expression of the meristem genes and of genes required for auxin responses. Involved in the development of the basal pole and in auxin-mediated root and vascular development in the embryo. Confers sensitivity to turnip mosaic virus (TuMV) probably by promoting viral movement and multiplication via interaction with TuMV VPg. The sequence is that of OBERON-like protein (PVIP) from Nicotiana benthamiana.